We begin with the raw amino-acid sequence, 468 residues long: Aspartate ammonia-lyase (468 aa).

L-aspartate is bound by residues Thr-99, Ser-138, Thr-139, Asn-140, and Thr-185. An SS loop region spans residues 315–324 (GSSIMPGKVN). The active-site Proton acceptor is the Ser-316. Residues Ser-317 and Lys-322 each contribute to the L-aspartate site.

Belongs to the class-II fumarase/aspartase family. Aspartase subfamily. Homotetramer.

The catalysed reaction is L-aspartate = fumarate + NH4(+). Functionally, catalyzes the reversible conversion of L-aspartate to fumarate and ammonia. In Helicobacter pylori (strain ATCC 700392 / 26695) (Campylobacter pylori), this protein is Aspartate ammonia-lyase (aspA).